Here is a 102-residue protein sequence, read N- to C-terminus: Protein translation factor SUI1 homolog (102 aa).

The protein belongs to the SUI1 family.

This is Protein translation factor SUI1 homolog from Methanococcus vannielii.